The chain runs to 424 residues: Splicing factor 3B subunit 4 (424 aa).

Alanine 2 bears the N-acetylalanine mark. RRM domains follow at residues 13-91 (ATVY…KASA) and 100-179 (ANIF…YAFK). Tyrosine 56 is modified (phosphotyrosine). Residues 207 to 424 (PHQLFADAPP…RGPLRGPLPQ (218 aa)) form a disordered region. Low complexity predominate over residues 222–231 (NPVVSSLGSG). The segment covering 232–268 (LPPPGMPPPGSFPPPVPPPGALPPGIPPAMPPPPMPP) has biased composition (pro residues). Low complexity-rich tracts occupy residues 269-280 (GAAGHGPPSAGT) and 303-323 (HPGM…GHPH). Composition is skewed to pro residues over residues 332 to 381 (QPPP…PLMP) and 388 to 424 (PPRP…PLPQ).

Belongs to the SF3B4 family. Component of the 17S U2 SnRNP complex, a ribonucleoprotein complex that contains small nuclear RNA (snRNA) U2 and a number of specific proteins. Part of the SF3B subcomplex of the 17S U2 SnRNP complex. SF3B associates with the splicing subcomplex SF3A and a 12S RNA unit to form the U2 small nuclear ribonucleoproteins complex (U2 snRNP). SF3B4 has been found in complex spliceosome 'B' and 'C' as well. Component of the minor (U12-type spliceosome) spliceosome. Found in a complex with PRMT9, SF3B2 and SF3B4.

It localises to the nucleus. In terms of biological role, component of the 17S U2 SnRNP complex of the spliceosome, a large ribonucleoprotein complex that removes introns from transcribed pre-mRNAs. The 17S U2 SnRNP complex (1) directly participates in early spliceosome assembly and (2) mediates recognition of the intron branch site during pre-mRNA splicing by promoting the selection of the pre-mRNA branch-site adenosine, the nucleophile for the first step of splicing. Within the 17S U2 SnRNP complex, SF3B4 is part of the SF3B subcomplex, which is required for 'A' complex assembly formed by the stable binding of U2 snRNP to the branchpoint sequence in pre-mRNA. Sequence independent binding of SF3A and SF3B subcomplexes upstream of the branch site is essential, it may anchor U2 snRNP to the pre-mRNA. May also be involved in the assembly of the 'E' complex. Also acts as a component of the minor spliceosome, which is involved in the splicing of U12-type introns in pre-mRNAs. In Homo sapiens (Human), this protein is Splicing factor 3B subunit 4 (SF3B4).